We begin with the raw amino-acid sequence, 279 residues long: Undecaprenyl-diphosphatase (279 aa).

8 consecutive transmembrane segments (helical) span residues 2-22, 44-64, 85-105, 113-133, 163-183, 188-208, 223-243, and 255-275; these read LIIELLKAIFFGIIEGITEWL, AFIEMFNIVIQLGAIIAVMLI, WQLWLKVVIACIPSILIAVPL, FYFMVPIAIALIVYGIAFIWI, VLSIVPGTSRSGATILGAIIL, TVAADFTFFLAIPTMFGYSGL, AQVLILLVASLTAFVVSLLAI, and FTIFGKYRIVLGSLLLIYSFF.

The protein belongs to the UppP family.

Its subcellular location is the cell membrane. It carries out the reaction di-trans,octa-cis-undecaprenyl diphosphate + H2O = di-trans,octa-cis-undecaprenyl phosphate + phosphate + H(+). Its function is as follows. Catalyzes the dephosphorylation of undecaprenyl diphosphate (UPP). Confers resistance to bacitracin. This chain is Undecaprenyl-diphosphatase, found in Streptococcus pyogenes serotype M28 (strain MGAS6180).